The following is a 420-amino-acid chain: MPRKSILSVNAGSSSVKITFYSYTKTPSVIATAQVSGITAPPATFKYSVGSKQKKEELKEKISSGPDAFKLLLHRCFTDSDLKDVASADDLAYICHRVVHGGDFESPVVINEETYHQLEDLEDLAPLHNFAALEIVRLCKKELPNVQSITFFDSSFHKSLPPYVKTYPIDQETARRNKLRKYGFHGISYSFILRSVAEYLNKPVEKTSLIALHIGSGASVCAIKDGKSIDTSMGLTPLAGLPGATRSGDIDPSLVFHYTNEAGKLSPASTKEMHISTAEEILNKKSGWKVLTGTTDFSQIAVEDPPSEQHKLAFDILVDRIVGYIGNYYVKLDGQVEGIVFAGGIGEKSALLRKAVIEQTRCLGFAVDPEKNQHGPGDDETVVDITASGRSDVKRVFICQTDEQFEMAYNCTKTQGLDKQ.

Mg(2+) is bound at residue N10. K17 serves as a coordination point for ATP. Position 97 (R97) interacts with substrate. D153 functions as the Proton donor/acceptor in the catalytic mechanism. 213 to 217 contributes to the ATP binding site; that stretch reads HIGSG. E403 provides a ligand contact to Mg(2+).

Belongs to the acetokinase family. The cofactor is Mg(2+).

It carries out the reaction acetate + ATP = acetyl phosphate + ADP. The protein operates within metabolic intermediate biosynthesis; acetyl-CoA biosynthesis; acetyl-CoA from acetate: step 1/2. The polypeptide is Probable acetate kinase (Emericella nidulans (strain FGSC A4 / ATCC 38163 / CBS 112.46 / NRRL 194 / M139) (Aspergillus nidulans)).